Here is a 122-residue protein sequence, read N- to C-terminus: Truncated CrmB protein (122 aa).

The protein is truncated in this strain and presumably inactive. It has similarities with variola virus CrmB, but the product is inactivated due to several premature stop codons. This chain is Truncated CrmB protein (OPG002), found in Bos taurus (Bovine).